Here is a 623-residue protein sequence, read N- to C-terminus: Riboflavin biosynthesis protein PYRR, chloroplastic (623 aa).

Residues 1 to 45 (MPLPQPLLGGASPAPARAASSFLHPLLHTRHRVSTAPAAASSFVP) constitute a chloroplast transit peptide. The region spanning 52–181 (ANDAMLLRRA…ALRNEGIQVD (130 aa)) is the CMP/dCMP-type deaminase domain.

In the C-terminal section; belongs to the YbiA family.

The protein localises to the plastid. The protein resides in the chloroplast. The catalysed reaction is 5-amino-6-(5-phospho-D-ribitylamino)uracil + NADP(+) = 5-amino-6-(5-phospho-D-ribosylamino)uracil + NADPH + H(+). The enzyme catalyses 2,5-diamino-6-hydroxy-4-(5-phosphoribosylamino)-pyrimidine + H2O = 2,5,6-triamino-4-hydroxypyrimidine + D-ribose 5-phosphate. It catalyses the reaction 5-amino-6-(5-phospho-D-ribosylamino)uracil + H2O = 5,6-diaminouracil + D-ribose 5-phosphate. It functions in the pathway cofactor biosynthesis; riboflavin biosynthesis; 5-amino-6-(D-ribitylamino)uracil from GTP: step 3/4. In terms of biological role, pyrimidine reductase involved in the riboflavin biosynthesis pathway. Also has a non-functional N-terminal deaminase domain that lacks the catalytically essential zinc-binding residues. 39% activity when NADH replaces NADPH. No evidence for a phosphatase activity conferred by the N-terminal domain. Its function is as follows. Catalyzes the hydrolysis of the N-glycosidic bond in the first two intermediates of riboflavin biosynthesis, which are highly reactive metabolites, yielding relatively innocuous products. Thus, can divert a surplus of harmful intermediates into relatively harmless products and pre-empt the damage these intermediates would otherwise do. Has no activity against GTP, nucleoside monophosphates or ADP-ribose. The chain is Riboflavin biosynthesis protein PYRR, chloroplastic (PYRR) from Zea mays (Maize).